Consider the following 127-residue polypeptide: Dual endothelin-1/VEGF signal peptide receptor (127 aa).

The Extracellular segment spans residues 1–69 (MSTFYVTAVP…EMKSRWNWGS (69 aa)). Residues 70-88 (ITCIMCFTCVGSQLSMSSS) form a helical membrane-spanning segment. Residues 89–127 (KASNFSGPLQLYQRGIGHITNPYRRPPAPAWPCSSSGTT) lie on the Cytoplasmic side of the membrane.

Prominently expressed in brain and heart tissues. Weakly expressed in aorta, adrenal gland, and lung tissues.

The protein resides in the cell membrane. Its function is as follows. In the Dahl salt-resistant strain, acts as a dual receptor for both endothelin-1 and the signal sequence of vascular endothelial growth factor A and does not act as a receptor for angiotensin-2. Does not bind the VEGFA mature protein. In the Dahl salt-sensitive strain, acts as a dual endothelin-1/angiotensin-2 receptor that is functionally coupled to a calcium-mobilizing transduction system, responding equivalently to both endothelin-1/EDN1 and angiotensin-2 peptides in a highly specific manner. May play a role in angiogenesis with a significant role in cardiovascular and neural development. In Rattus norvegicus (Rat), this protein is Dual endothelin-1/VEGF signal peptide receptor.